A 479-amino-acid polypeptide reads, in one-letter code: Glycogen synthase (479 aa).

ADP-alpha-D-glucose is bound at residue lysine 15.

The protein belongs to the glycosyltransferase 1 family. Bacterial/plant glycogen synthase subfamily.

It carries out the reaction [(1-&gt;4)-alpha-D-glucosyl](n) + ADP-alpha-D-glucose = [(1-&gt;4)-alpha-D-glucosyl](n+1) + ADP + H(+). The protein operates within glycan biosynthesis; glycogen biosynthesis. Functionally, synthesizes alpha-1,4-glucan chains using ADP-glucose. The sequence is that of Glycogen synthase from Histophilus somni (strain 129Pt) (Haemophilus somnus).